A 315-amino-acid chain; its full sequence is Replication factor C small subunit (315 aa).

ATP is bound at residue 43–50 (GSPGVGKT).

The protein belongs to the activator 1 small subunits family. RfcS subfamily. As to quaternary structure, heteromultimer composed of small subunits (RfcS) and large subunits (RfcL).

Its function is as follows. Part of the RFC clamp loader complex which loads the PCNA sliding clamp onto DNA. This is Replication factor C small subunit from Methanococcus maripaludis (strain DSM 14266 / JCM 13030 / NBRC 101832 / S2 / LL).